Reading from the N-terminus, the 229-residue chain is UPF0758 protein Mbur_0382 (229 aa).

One can recognise an MPN domain in the interval 106-228 (KIRSANDVYS…YVSLKEEGYI (123 aa)). Residues His-177, His-179, and Asp-190 each coordinate Zn(2+). A JAMM motif motif is present at residues 177–190 (HNHPSGDPAPSRED).

This sequence belongs to the UPF0758 family.

The sequence is that of UPF0758 protein Mbur_0382 from Methanococcoides burtonii (strain DSM 6242 / NBRC 107633 / OCM 468 / ACE-M).